The primary structure comprises 87 residues: Small ribosomal subunit protein bS18 (87 aa).

Residues 1 to 19 show a composition bias toward basic residues; that stretch reads MSTRSRARKRSRVRSRTRR. The disordered stretch occupies residues 1–25; sequence MSTRSRARKRSRVRSRTRRKDPIFV.

This sequence belongs to the bacterial ribosomal protein bS18 family. In terms of assembly, part of the 30S ribosomal subunit. Forms a tight heterodimer with protein bS6.

Functionally, binds as a heterodimer with protein bS6 to the central domain of the 16S rRNA, where it helps stabilize the platform of the 30S subunit. This Rhodopirellula baltica (strain DSM 10527 / NCIMB 13988 / SH1) protein is Small ribosomal subunit protein bS18.